Here is a 113-residue protein sequence, read N- to C-terminus: Hydrogenase maturation factor HypA (113 aa).

His2 serves as a coordination point for Ni(2+). 4 residues coordinate Zn(2+): Cys73, Cys76, Cys89, and Cys92.

This sequence belongs to the HypA/HybF family.

Involved in the maturation of [NiFe] hydrogenases. Required for nickel insertion into the metal center of the hydrogenase. This is Hydrogenase maturation factor HypA from Picosynechococcus sp. (strain ATCC 27264 / PCC 7002 / PR-6) (Agmenellum quadruplicatum).